The chain runs to 431 residues: DNA polymerase delta subunit 3 (431 aa).

Positions 64–80 (QGSDSGEDLYSVVLESR) are necessary for function, possibly resulting from its inability to interact with PolD2. Residues 128-431 (PGAGKIVPSA…AGIMNFFSKK (304 aa)) are disordered. A compositionally biased stretch (low complexity) spans 156–171 (SKSAVKLEPSKSSLKS). Composition is skewed to basic and acidic residues over residues 172 to 200 (EPAKSKAEKPVASKSSPEDKKTSPKEQAS) and 252 to 271 (SPPESEDKSKKDASNSNKKE). A compositionally biased stretch (low complexity) spans 278-290 (PSPTKKPTTANTS). A compositionally biased stretch (acidic residues) spans 294-307 (FDEESAESSDEEEK). Basic and acidic residues-rich tracts occupy residues 308–328 (LDMLRRKVIESDNDSDQEKAS) and 343–362 (QPPKKSADEETIALDEKMDT). The segment covering 387 to 411 (PANKKVSPKAAAPVNKKKSPPSAAK) has biased composition (low complexity).

Component of both the DNA polymerase delta and DNA polymerase zeta complexes. The DNA polymerase delta complex consists of three subunits: the catalytic subunit PolD1 and two accessory subunits PolD2/Pol31 and PolD3/Pol32. Within the delta complex, interacts with both PolD1 and PolD2. Component of the DNA polymerase zeta complex consisting of four subunits: the catalytic subunit PolZ1 and three accessory subunits PolZ2/Rev7, PolD2/Pol31 and PolD3/Pol32. As to expression, expressed in ovaries (at the protein level). Expressed in ovaries.

The protein resides in the nucleus. Its subcellular location is the nucleoplasm. Accessory component of the DNA polymerase delta complex and possibly the DNA polymerase zeta complex. As a component of the delta complex, participates in high fidelity genome replication, including lagging strand synthesis, DNA recombination and repair. Required to recruit the DNA polymerase delta complex to the nucleus of rapidly dividing embryonic cells, and as a consequence is essential for genome replication during the earliest cell cycles. Increases the efficiency and processivity of DNA synthesis of the DNA polymerases during mitotic DNA replication and repair. During development this function is essential for preventing replication stress that results in the formation of chromosomal fragile sites (CFS) such as chromosomal breaks. Ensures genomic stability by promoting several types of DNA repair mechanisms including repairing broken dicentric chromosomes through homolog-dependent break-induced replication (BIR). During homologous recombination (HR) repair, required for maintaining the processivity of the delta complex during break-induced replication; a form of HR that requires extensive DNA synthesis such as the repair of large gaps. Able to suppress position effect variegation and may therefore have a role in the induction of chromatin state changes that likely include its activities in DNA replication and repair. This chain is DNA polymerase delta subunit 3, found in Drosophila melanogaster (Fruit fly).